A 178-amino-acid chain; its full sequence is Caveolin-1 (178 aa).

Serine 2 carries the post-translational modification N-acetylserine. Serine 2 carries the post-translational modification Phosphoserine. The tract at residues 2–94 is required for homooligomerization; it reads SGGKYVDSEG…WKASFTTFTV (93 aa). Residues 2–104 are Cytoplasmic-facing; it reads SGGKYVDSEG…TKYWFYRLLS (103 aa). Lysine 5 is modified (N6-acetyllysine; alternate). A Glycyl lysine isopeptide (Lys-Gly) (interchain with G-Cter in ubiquitin); alternate cross-link involves residue lysine 5. Position 6 is a phosphotyrosine (tyrosine 6). Phosphoserine is present on serine 9. Position 14 is a phosphotyrosine; by ABL1 (tyrosine 14). Tyrosine 25 bears the Phosphotyrosine mark. Glycyl lysine isopeptide (Lys-Gly) (interchain with G-Cter in ubiquitin) cross-links involve residues lysine 26, lysine 30, lysine 39, lysine 47, and lysine 57. Residues 82–94 are interaction with CAVIN3; sequence DGIWKASFTTFTV. The segment at residues 105-125 is an intramembrane region (helical); it reads SLVGIPVALIWGIYFAILSFL. Topologically, residues 126-178 are cytoplasmic; the sequence is YIWAVVPCIKSFLIKIQCISRIYSICIHTFCDPLYEAIGKIFSNIRISMQKEI. The tract at residues 131 to 142 is interacts with SPRY1, SPRY2, SPRY3 and SPRY4; that stretch reads VPCIKSFLIKIQ. Residues cysteine 133, cysteine 143, and cysteine 156 are each lipidated (S-palmitoyl cysteine). Positions 149 to 160 are interacts with SPRY1, SPRY2, and SPRY4; sequence SICIHTFCDPLY. The tract at residues 167–178 is interacts with SPRY1, SPRY2, SPRY3 and SPRY4; sequence FSNIRISMQKEI.

Belongs to the caveolin family. In terms of assembly, homooligomer. Interacts with GLIPR2. Interacts with NOSTRIN. Interacts with SNAP25 and STX1A. Interacts (via the N-terminus) with DPP4; the interaction is direct. Interacts with CTNNB1, CDH1 and JUP. Interacts with PACSIN2; this interaction induces membrane tubulation. Interacts with SLC7A9. Interacts with BMX and BTK. Interacts with TGFBR1. Interacts with CAVIN3 (via leucine-zipper domain) in a cholesterol-sensitive manner. Interacts with CAVIN1. Interacts with EHD2 in a cholesterol-dependent manner. Forms a ternary complex with UBXN6 and VCP; mediates CAV1 targeting to lysosomes for degradation. Interacts with ABCG1; this interaction regulates ABCG1-mediated cholesterol efflux. Interacts with NEU3; this interaction enhances NEU3 sialidase activity within caveola. Interacts (via C-terminus) with SPRY1, SPRY2 (via C-terminus), SPRY3, and SPRY4. Interacts with IGFBP5; this interaction allows trafficking of IGFBP5 from the plasma membrane to the nucleus. Phosphorylated at Tyr-14 by ABL1 in response to oxidative stress. Post-translationally, ubiquitinated. Undergo monoubiquitination and multi- and/or polyubiquitination. Monoubiquitination of N-terminal lysines promotes integration in a ternary complex with UBXN6 and VCP which promotes oligomeric CAV1 targeting to lysosomes for degradation. Ubiquitinated by ZNRF1; leading to degradation and modulation of the TLR4-mediated immune response.

It is found in the golgi apparatus membrane. It localises to the cell membrane. The protein localises to the membrane. The protein resides in the caveola. Its subcellular location is the membrane raft. In terms of biological role, may act as a scaffolding protein within caveolar membranes. Forms a stable heterooligomeric complex with CAV2 that targets to lipid rafts and drives caveolae formation. Mediates the recruitment of CAVIN proteins (CAVIN1/2/3/4) to the caveolae. Interacts directly with G-protein alpha subunits and can functionally regulate their activity. Involved in the costimulatory signal essential for T-cell receptor (TCR)-mediated T-cell activation. Its binding to DPP4 induces T-cell proliferation and NF-kappa-B activation in a T-cell receptor/CD3-dependent manner. Recruits CTNNB1 to caveolar membranes and may regulate CTNNB1-mediated signaling through the Wnt pathway. Negatively regulates TGFB1-mediated activation of SMAD2/3 by mediating the internalization of TGFBR1 from membrane rafts leading to its subsequent degradation. Binds 20(S)-hydroxycholesterol (20(S)-OHC). The chain is Caveolin-1 (CAV1) from Atelerix albiventris (Middle-African hedgehog).